The sequence spans 168 residues: Bifunctional protein PyrR (168 aa).

Residues 90–102 carry the PRPP-binding motif; sequence LVLIDDVLMSGRT.

It belongs to the purine/pyrimidine phosphoribosyltransferase family. PyrR subfamily.

It carries out the reaction UMP + diphosphate = 5-phospho-alpha-D-ribose 1-diphosphate + uracil. Functionally, regulates the transcription of the pyrimidine nucleotide (pyr) operon in response to exogenous pyrimidines. Its function is as follows. Also displays a weak uracil phosphoribosyltransferase activity which is not physiologically significant. The chain is Bifunctional protein PyrR from Pseudomonas fluorescens (strain ATCC BAA-477 / NRRL B-23932 / Pf-5).